A 79-amino-acid polypeptide reads, in one-letter code: Small proline-rich protein 4 (79 aa).

The segment covering 1–26 (MSSQQQQRQQQQCPPQRAQQQQVKQP) has biased composition (low complexity). The disordered stretch occupies residues 1–79 (MSSQQQQRQQ…AQQASKSKQK (79 aa)). Positions 66–79 (KCPSAQQASKSKQK) are enriched in polar residues.

The protein belongs to the cornifin (SPRR) family. Post-translationally, cross-linked to membrane proteins by transglutaminase.

It is found in the cytoplasm. It localises to the cell cortex. Its function is as follows. Cross-linked envelope protein of keratinocytes. Involved in UV-induced cornification. The protein is Small proline-rich protein 4 (SPRR4) of Homo sapiens (Human).